The primary structure comprises 159 residues: SsrA-binding protein (159 aa).

The disordered stretch occupies residues 134–159 (KLHDKRETSKERDWNRQKNRLLKERG). Positions 137-159 (DKRETSKERDWNRQKNRLLKERG) are enriched in basic and acidic residues.

The protein belongs to the SmpB family.

The protein localises to the cytoplasm. Functionally, required for rescue of stalled ribosomes mediated by trans-translation. Binds to transfer-messenger RNA (tmRNA), required for stable association of tmRNA with ribosomes. tmRNA and SmpB together mimic tRNA shape, replacing the anticodon stem-loop with SmpB. tmRNA is encoded by the ssrA gene; the 2 termini fold to resemble tRNA(Ala) and it encodes a 'tag peptide', a short internal open reading frame. During trans-translation Ala-aminoacylated tmRNA acts like a tRNA, entering the A-site of stalled ribosomes, displacing the stalled mRNA. The ribosome then switches to translate the ORF on the tmRNA; the nascent peptide is terminated with the 'tag peptide' encoded by the tmRNA and targeted for degradation. The ribosome is freed to recommence translation, which seems to be the essential function of trans-translation. The polypeptide is SsrA-binding protein (Sinorhizobium fredii (strain NBRC 101917 / NGR234)).